Consider the following 366-residue polypeptide: tRNA(Met) cytidine acetate ligase (366 aa).

ATP contacts are provided by residues 7 to 20 (IAEFNPFHYGHQYL), Gly-96, Asn-152, and Arg-175.

The protein belongs to the TmcAL family.

The protein localises to the cytoplasm. The enzyme catalyses cytidine(34) in elongator tRNA(Met) + acetate + ATP = N(4)-acetylcytidine(34) in elongator tRNA(Met) + AMP + diphosphate. Catalyzes the formation of N(4)-acetylcytidine (ac(4)C) at the wobble position of elongator tRNA(Met), using acetate and ATP as substrates. First activates an acetate ion to form acetyladenylate (Ac-AMP) and then transfers the acetyl group to tRNA to form ac(4)C34. This is tRNA(Met) cytidine acetate ligase from Streptococcus equi subsp. zooepidemicus (strain H70).